Reading from the N-terminus, the 153-residue chain is Regulator of sigma D (153 aa).

The protein belongs to the Rsd/AlgQ family. Interacts with RpoD.

It localises to the cytoplasm. Its function is as follows. Binds RpoD and negatively regulates RpoD-mediated transcription activation by preventing the interaction between the primary sigma factor RpoD with the catalytic core of the RNA polymerase and with promoter DNA. May be involved in replacement of the RNA polymerase sigma subunit from RpoD to RpoS during the transition from exponential growth to the stationary phase. The polypeptide is Regulator of sigma D (Pectobacterium carotovorum subsp. carotovorum (strain PC1)).